The primary structure comprises 221 residues: UPF0328 protein ECU11_2110 (221 aa).

Belongs to the UPF0328 family.

This chain is UPF0328 protein ECU11_2110, found in Encephalitozoon cuniculi (strain GB-M1) (Microsporidian parasite).